Consider the following 131-residue polypeptide: UPF0102 protein YraN (131 aa).

The span at Met1–Thr19 shows a compositional bias: polar residues. The tract at residues Met1–Asp21 is disordered.

This sequence belongs to the UPF0102 family.

The polypeptide is UPF0102 protein YraN (Escherichia coli O45:K1 (strain S88 / ExPEC)).